The primary structure comprises 175 residues: RNA pyrophosphohydrolase (175 aa).

The 144-residue stretch at 6–149 (GYRPNVGIVI…KRDVYRRVMK (144 aa)) folds into the Nudix hydrolase domain. Residues 38–59 (GGINPGETPEQAMYRELFEEVG) carry the Nudix box motif.

This sequence belongs to the Nudix hydrolase family. RppH subfamily. A divalent metal cation is required as a cofactor.

Accelerates the degradation of transcripts by removing pyrophosphate from the 5'-end of triphosphorylated RNA, leading to a more labile monophosphorylated state that can stimulate subsequent ribonuclease cleavage. This chain is RNA pyrophosphohydrolase, found in Yersinia pseudotuberculosis serotype O:1b (strain IP 31758).